The following is a 359-amino-acid chain: Trans-enoyl reductase mpsG (359 aa).

NADP(+)-binding residues include Tyr212, Leu259, and Thr278.

It belongs to the zinc-containing alcohol dehydrogenase family. As to quaternary structure, monomer.

Its pathway is secondary metabolite biosynthesis. Trans-enoyl reductase; part of the gene cluster that mediates the biosynthesis of macrophasetins, 3-decalinoyltetramic acids (DTAs) which feature a tetramate (pyrrolidine-2,4-dione) unit connected to a decalin fragment and that have potent bioactivities. The PKS-NRPS mpsA together with its associated enoylreductase partner mpsG incorporate one unit of acetyl-CoA, seven units of malonyl-CoA, and one unit of L-alanine to assemble the linear tetramic acid intermediate corresponding to the backbone of macrophasetins. Without the Diels-Alderase mpsD, the mpsA/G product can undergo the non-enzymatic intramolecular Diels-Alder (IMDA) reaction to generate both macrophasetin A and macrophasetin B. Catalyzed by mpsD, the linear tetramic acid intermediate is thoroughly converted to macrophasetin A via the endo-IMDA reaction in a regioselective and stereoselective manner. Finally, the cytochrome P450 monooxygenase mpsF catalyzes the hydroxylation at C20 to yield the end product macrophasetin C. The sequence is that of Trans-enoyl reductase mpsG from Macrophomina phaseolina (strain MS6) (Charcoal rot fungus).